Consider the following 259-residue polypeptide: Type III pantothenate kinase (259 aa).

Residue 6–13 coordinates ATP; it reads DCGNTNTV. Substrate is bound at residue 107–110; sequence GPDR. Asp109 functions as the Proton acceptor in the catalytic mechanism. Asp129 contributes to the K(+) binding site. Thr132 is a binding site for ATP. Thr184 is a substrate binding site.

Belongs to the type III pantothenate kinase family. As to quaternary structure, homodimer. It depends on NH4(+) as a cofactor. Requires K(+) as cofactor.

Its subcellular location is the cytoplasm. It catalyses the reaction (R)-pantothenate + ATP = (R)-4'-phosphopantothenate + ADP + H(+). It participates in cofactor biosynthesis; coenzyme A biosynthesis; CoA from (R)-pantothenate: step 1/5. Catalyzes the phosphorylation of pantothenate (Pan), the first step in CoA biosynthesis. This is Type III pantothenate kinase from Jannaschia sp. (strain CCS1).